The sequence spans 425 residues: UDP-N-acetylglucosamine 1-carboxyvinyltransferase (425 aa).

Residue 23–24 coordinates phosphoenolpyruvate; that stretch reads KN. R100 is a UDP-N-acetyl-alpha-D-glucosamine binding site. C124 acts as the Proton donor in catalysis. C124 carries the post-translational modification 2-(S-cysteinyl)pyruvic acid O-phosphothioketal. D313 and I335 together coordinate UDP-N-acetyl-alpha-D-glucosamine.

It belongs to the EPSP synthase family. MurA subfamily.

The protein resides in the cytoplasm. It catalyses the reaction phosphoenolpyruvate + UDP-N-acetyl-alpha-D-glucosamine = UDP-N-acetyl-3-O-(1-carboxyvinyl)-alpha-D-glucosamine + phosphate. It functions in the pathway cell wall biogenesis; peptidoglycan biosynthesis. In terms of biological role, cell wall formation. Adds enolpyruvyl to UDP-N-acetylglucosamine. In Wolbachia sp. subsp. Brugia malayi (strain TRS), this protein is UDP-N-acetylglucosamine 1-carboxyvinyltransferase.